A 188-amino-acid chain; its full sequence is Putative 3-methyladenine DNA glycosylase (188 aa).

Belongs to the DNA glycosylase MPG family.

In Ehrlichia ruminantium (strain Gardel), this protein is Putative 3-methyladenine DNA glycosylase.